We begin with the raw amino-acid sequence, 449 residues long: 4-aminobutyrate aminotransferase (449 aa).

At K294 the chain carries N6-(pyridoxal phosphate)lysine.

The protein belongs to the class-III pyridoxal-phosphate-dependent aminotransferase family. The cofactor is pyridoxal 5'-phosphate.

The catalysed reaction is 4-aminobutanoate + 2-oxoglutarate = succinate semialdehyde + L-glutamate. It carries out the reaction (S)-3-amino-2-methylpropanoate + 2-oxoglutarate = 2-methyl-3-oxopropanoate + L-glutamate. It functions in the pathway amino-acid degradation; 4-aminobutanoate degradation. This is 4-aminobutyrate aminotransferase (gabT) from Mycobacterium bovis (strain ATCC BAA-935 / AF2122/97).